We begin with the raw amino-acid sequence, 100 residues long: Eukaryotic translation initiation factor 4E-binding protein 3 (100 aa).

The YXXXXLphi motif signature appears at 40–46; that stretch reads YDRKFLL. Positions 81–100 are disordered; that stretch reads LKEQETEEEIPDDAQFEMDI. A compositionally biased stretch (acidic residues) spans 85–100; the sequence is ETEEEIPDDAQFEMDI. The TOS motif signature appears at 96–100; it reads FEMDI.

This sequence belongs to the eIF4E-binding protein family. In terms of assembly, interacts with EIF4E. Interacts with RPA2 (in unphosphorylated form via N-terminus); the interaction enhances EIF4EBP3-mediated inhibition of EIF4E-mediated mRNA nuclear export. Phosphorylated. As to expression, expression is highest in skeletal muscle, heart, kidney, and pancreas, whereas there is very little expression in brain and thymus.

The protein localises to the cytoplasm. Its subcellular location is the nucleus. In terms of biological role, repressor of translation initiation that regulates EIF4E activity by preventing its assembly into the eIF4F complex: the hypophosphorylated form competes with EIF4G1/EIF4G3 and strongly binds to EIF4E, leading to repression of translation. In contrast, the hyperphosphorylated form dissociates from EIF4E, allowing interaction between EIF4G1/EIF4G3 and EIF4E, leading to initiation of translation. Inhibits EIF4E-mediated mRNA nuclear export. This Homo sapiens (Human) protein is Eukaryotic translation initiation factor 4E-binding protein 3 (EIF4EBP3).